The sequence spans 348 residues: MKATLAAPSSLTSLPYRTNSSFGSKSSLLFRSPSSSSSVSMTTTRGNVAVAAAATSTEALRKGIAEFYNETSGLWEEIWGDHMHHGFYDPDSSVQLSDSGHKEAQIRMIEESLRFAGVTDEEEEKKIKKVVDVGCGIGGSSRYLASKFGAECIGITLSPVQAKRANDLAAAQSLAHKASFQVADALDQPFEDGKFDLVWSMESGEHMPDKAKFVKELVRVAAPGGRIIIVTWCHRNLSAGEEALQPWEQNILDKICKTFYLPAWCSTDDYVNLLQSHSLQDIKCADWSENVAPFWPAVIRTALTWKGLVSLLRSGMKSIKGALTMPLMIEGYKKGVIKFGIITCQKPL.

Residues 1–51 (MKATLAAPSSLTSLPYRTNSSFGSKSSLLFRSPSSSSSVSMTTTRGNVAVA) constitute a chloroplast transit peptide. The residue at position 52 (Ala52) is an N-acetylalanine. The tract at residues 130–139 (VVDVGCGIGG) is SAM motif I. Residues 193–201 (GKFDLVWSM) form an SAM motif II region. An SAM motif III region spans residues 220–229 (VAAPGGRIII).

Belongs to the class I-like SAM-binding methyltransferase superfamily. gTMT family.

The protein resides in the plastid. It is found in the chloroplast. The catalysed reaction is gamma-tocopherol + S-adenosyl-L-methionine = (+)-alpha-tocopherol + S-adenosyl-L-homocysteine + H(+). It carries out the reaction delta-tocotrienol + S-adenosyl-L-methionine = beta-tocotrienol + S-adenosyl-L-homocysteine + H(+). It catalyses the reaction gamma-tocotrienol + S-adenosyl-L-methionine = alpha-tocotrienol + S-adenosyl-L-homocysteine + H(+). The enzyme catalyses delta-tocopherol + S-adenosyl-L-methionine = beta-tocopherol + S-adenosyl-L-homocysteine + H(+). The protein operates within cofactor biosynthesis; tocopherol biosynthesis. Functionally, involved in the synthesis of tocopherol (vitamin E). Methylates gamma- and delta-tocopherol to form beta- and alpha-tocopherol, respectively. The chain is Tocopherol O-methyltransferase, chloroplastic (VTE4) from Arabidopsis thaliana (Mouse-ear cress).